A 143-amino-acid chain; its full sequence is Nucleoside diphosphate kinase (143 aa).

The ATP site is built by Lys-11, Phe-59, Arg-87, Thr-93, Arg-104, and Asn-114. Catalysis depends on His-117, which acts as the Pros-phosphohistidine intermediate.

This sequence belongs to the NDK family. In terms of assembly, homotetramer. The cofactor is Mg(2+).

It is found in the cytoplasm. It carries out the reaction a 2'-deoxyribonucleoside 5'-diphosphate + ATP = a 2'-deoxyribonucleoside 5'-triphosphate + ADP. The enzyme catalyses a ribonucleoside 5'-diphosphate + ATP = a ribonucleoside 5'-triphosphate + ADP. Functionally, major role in the synthesis of nucleoside triphosphates other than ATP. The ATP gamma phosphate is transferred to the NDP beta phosphate via a ping-pong mechanism, using a phosphorylated active-site intermediate. This chain is Nucleoside diphosphate kinase, found in Alteromonas mediterranea (strain DSM 17117 / CIP 110805 / LMG 28347 / Deep ecotype).